The following is a 519-amino-acid chain: Na(+)/H(+) exchange regulatory cofactor NHE-RF3 (519 aa).

PDZ domains lie at 9-90 (ECKL…LDGD), 134-215 (RLCY…VDKE), and 243-323 (IVEM…VDKE). Phosphoserine is present on residues Ser-148, Ser-192, Ser-250, Ser-334, and Ser-348. The disordered stretch occupies residues 347-374 (GSVKEAPAPTPTSLEVSSPPDTTEEVDH). A compositionally biased stretch (polar residues) spans 357 to 367 (PTSLEVSSPPD). Positions 378–458 (LCRLAKGENG…NVTLLVCGKK (81 aa)) constitute a PDZ 4 domain. Thr-451 carries the phosphothreonine modification. A disordered region spans residues 473–519 (SLADPPDTPPDSKEGIVVESKHDSHMAKERAHSTASHSSSNSEDTEM). Over residues 482–504 (PDSKEGIVVESKHDSHMAKERAH) the composition is skewed to basic and acidic residues. A phosphoserine mark is found at Ser-492, Ser-508, Ser-510, Ser-511, Ser-512, and Ser-514. Residues 505 to 519 (STASHSSSNSEDTEM) are compositionally biased toward low complexity.

Belongs to the NHER family. Interacts with PDZK1IP1 and ABCC2. Binds to the C-terminal region of SLC26A3. Interacts (via PDZ domains 1 and 3) with SCARB1 (C-terminal domain). Forms a heterodimeric complex with NHERF1. Interacts with AKAP2, BCR, CFTR, SLCO1A1, SLC22A12, SLC22A4, SLC22A5, NHERF2 and SLC17A1. Component of a complex, composed of PDZK1, SYNGAP1, KLHL17 and NMDA receptors. Interacts (via PDZ1 domain) directly with KLHL17; the interaction is important for integrity of actin cytoskeleton structures in neurons. Interacts (via C-terminal PDZ domain) with SLC26A6 (via C-terminal domain). Interacts (via C-terminal PDZ domain) with SLC9A3 (via C-terminal domain). Interacts (via the first PDZ domain) with PTGIR (via non-isoprenylated C-terminus). Interacts (via PDZ domains 1 and 3) with SLC5A8 (via PDZ-binding motif); interaction increases nicotinate transport activity of SLC5A8.

The protein resides in the membrane. It is found in the cell membrane. Functionally, a scaffold protein that connects plasma membrane proteins and regulatory components, regulating their surface expression in epithelial cells apical domains. May be involved in the coordination of a diverse range of regulatory processes for ion transport and second messenger cascades. In complex with NHERF1, may cluster proteins that are functionally dependent in a mutual fashion and modulate the trafficking and the activity of the associated membrane proteins. May play a role in the cellular mechanisms associated with multidrug resistance through its interaction with ABCC2 and PDZK1IP1. May potentiate the CFTR chloride channel activity. Required for normal cell-surface expression of SCARB1. Plays a role in maintaining normal plasma cholesterol levels via its effects on SCARB1. Plays a role in the normal localization and function of the chloride-anion exchanger SLC26A6 to the plasma membrane in the brush border of the proximal tubule of the kidney. May be involved in the regulation of proximal tubular Na(+)-dependent inorganic phosphate cotransport therefore playing an important role in tubule function. The sequence is that of Na(+)/H(+) exchange regulatory cofactor NHE-RF3 (PDZK1) from Pongo abelii (Sumatran orangutan).